Consider the following 172-residue polypeptide: Ribosome maturation factor RimM (172 aa).

The PRC barrel domain occupies 95–168 (AEGEFYYHQI…RVDVEIMEGL (74 aa)).

It belongs to the RimM family. In terms of assembly, binds ribosomal protein uS19.

Its subcellular location is the cytoplasm. Functionally, an accessory protein needed during the final step in the assembly of 30S ribosomal subunit, possibly for assembly of the head region. Essential for efficient processing of 16S rRNA. May be needed both before and after RbfA during the maturation of 16S rRNA. It has affinity for free ribosomal 30S subunits but not for 70S ribosomes. This is Ribosome maturation factor RimM from Streptococcus equi subsp. equi (strain 4047).